The following is a 342-amino-acid chain: Ribosomal RNA small subunit methyltransferase C (342 aa).

Belongs to the methyltransferase superfamily. RsmC family. Monomer.

The protein localises to the cytoplasm. It carries out the reaction guanosine(1207) in 16S rRNA + S-adenosyl-L-methionine = N(2)-methylguanosine(1207) in 16S rRNA + S-adenosyl-L-homocysteine + H(+). In terms of biological role, specifically methylates the guanine in position 1207 of 16S rRNA in the 30S particle. The chain is Ribosomal RNA small subunit methyltransferase C from Salmonella choleraesuis (strain SC-B67).